A 172-amino-acid chain; its full sequence is DCC family protein At1g52590, chloroplastic (172 aa).

Residues 1 to 25 constitute a chloroplast transit peptide; sequence MAILIPASFGRLTITSRAQVRVRVS.

The protein belongs to the DCC thiol-disulfide oxidoreductase family.

It localises to the plastid. Its subcellular location is the chloroplast. This chain is DCC family protein At1g52590, chloroplastic, found in Arabidopsis thaliana (Mouse-ear cress).